Consider the following 239-residue polypeptide: Probable phosphatase Csac_1188 (239 aa).

Zn(2+)-binding residues include histidine 8, histidine 10, histidine 16, histidine 41, glutamate 74, histidine 102, histidine 132, aspartate 192, and histidine 194.

This sequence belongs to the PHP family. Zn(2+) is required as a cofactor.

The sequence is that of Probable phosphatase Csac_1188 from Caldicellulosiruptor saccharolyticus (strain ATCC 43494 / DSM 8903 / Tp8T 6331).